The chain runs to 248 residues: DNA repair protein RecO (248 aa).

The protein belongs to the RecO family.

Involved in DNA repair and RecF pathway recombination. The sequence is that of DNA repair protein RecO from Bacillus mycoides (strain KBAB4) (Bacillus weihenstephanensis).